The chain runs to 285 residues: Energy-coupling factor transporter ATP-binding protein EcfA3 (285 aa).

The 237-residue stretch at 6–242 folds into the ABC transporter domain; the sequence is LKVEELNYNY…KEVIRKVNLR (237 aa). 39–46 contacts ATP; that stretch reads GGNGVGKS.

This sequence belongs to the ABC transporter superfamily. Energy-coupling factor EcfA family. As to quaternary structure, forms a stable energy-coupling factor (ECF) transporter complex composed of 2 membrane-embedded substrate-binding proteins (S component), 2 ATP-binding proteins (A component) and 2 transmembrane proteins (T component).

Its subcellular location is the cell membrane. Functionally, ATP-binding (A) component of a common energy-coupling factor (ECF) ABC-transporter complex. Unlike classic ABC transporters this ECF transporter provides the energy necessary to transport a number of different substrates. In Clostridium perfringens (strain ATCC 13124 / DSM 756 / JCM 1290 / NCIMB 6125 / NCTC 8237 / Type A), this protein is Energy-coupling factor transporter ATP-binding protein EcfA3.